We begin with the raw amino-acid sequence, 341 residues long: UDP-N-acetylenolpyruvoylglucosamine reductase (341 aa).

An FAD-binding PCMH-type domain is found at 15–185 (VTQSCLSLIE…TAVGLRLPKT (171 aa)). Residue Arg-161 is part of the active site. Ser-231 (proton donor) is an active-site residue. Residue Glu-327 is part of the active site.

The protein belongs to the MurB family. It depends on FAD as a cofactor.

Its subcellular location is the cytoplasm. The catalysed reaction is UDP-N-acetyl-alpha-D-muramate + NADP(+) = UDP-N-acetyl-3-O-(1-carboxyvinyl)-alpha-D-glucosamine + NADPH + H(+). It functions in the pathway cell wall biogenesis; peptidoglycan biosynthesis. Functionally, cell wall formation. In Shewanella oneidensis (strain ATCC 700550 / JCM 31522 / CIP 106686 / LMG 19005 / NCIMB 14063 / MR-1), this protein is UDP-N-acetylenolpyruvoylglucosamine reductase.